A 1607-amino-acid polypeptide reads, in one-letter code: Dicer-like protein 1 (1607 aa).

Positions 1–74 (MNAEMREGSS…PDTKKWIVND (74 aa)) are disordered. The 183-residue stretch at 142–324 (LFERAKTQNT…IARSPELEGL (183 aa)) folds into the Helicase ATP-binding domain. An ATP-binding site is contributed by 155-162 (LDTGSGKT). Residues 267-270 (DEAH) carry the DEAH box motif. The Helicase C-terminal domain occupies 461–632 (KVVILLRILR…EALPADRKLT (172 aa)). In terms of domain architecture, Dicer dsRNA-binding fold spans 665–755 (SLICLAAFVA…RPTFTKQLPA (91 aa)). The 136-residue stretch at 905 to 1040 (GAVTFVRDNE…IVLEPLRISP (136 aa)) folds into the PAZ domain. RNase III domains are found at residues 1063–1219 (LVAL…LTAQ) and 1272–1447 (AARF…VDSR). Residues Glu-1312, Asp-1433, and Glu-1436 each contribute to the Mg(2+) site. Residues 1478–1556 (HPVTFLAGIM…AKKAIQVLEG (79 aa)) enclose the DRBM domain. Residues Cys-1493, His-1527, Cys-1568, and Cys-1570 each contribute to the Zn(2+) site.

The protein belongs to the helicase family. Dicer subfamily. Mg(2+) serves as cofactor. It depends on Mn(2+) as a cofactor.

Its function is as follows. Dicer-like endonuclease involved in cleaving double-stranded RNA in the RNA interference (RNAi) pathway. Produces 21 to 25 bp dsRNAs (siRNAs) which target the selective destruction of homologous RNAs leading to sequence-specific suppression of gene expression, called post-transcriptional gene silencing (PTGS). Part of a broad host defense response against viral infection and transposons. This Chaetomium globosum (strain ATCC 6205 / CBS 148.51 / DSM 1962 / NBRC 6347 / NRRL 1970) (Soil fungus) protein is Dicer-like protein 1 (DCL1).